The primary structure comprises 127 residues: Small ribosomal subunit protein uS11 (127 aa).

The protein belongs to the universal ribosomal protein uS11 family. As to quaternary structure, part of the 30S ribosomal subunit. Interacts with proteins S7 and S18. Binds to IF-3.

Functionally, located on the platform of the 30S subunit, it bridges several disparate RNA helices of the 16S rRNA. Forms part of the Shine-Dalgarno cleft in the 70S ribosome. The chain is Small ribosomal subunit protein uS11 from Rickettsia felis (strain ATCC VR-1525 / URRWXCal2) (Rickettsia azadi).